The chain runs to 128 residues: Large ribosomal subunit protein uL22 (128 aa).

Positions 1–22 (MARGHRSQIKRERNANKDTRPS) are disordered. Residues 9 to 21 (IKRERNANKDTRP) show a composition bias toward basic and acidic residues.

This sequence belongs to the universal ribosomal protein uL22 family. In terms of assembly, part of the 50S ribosomal subunit.

Its function is as follows. This protein binds specifically to 23S rRNA; its binding is stimulated by other ribosomal proteins, e.g. L4, L17, and L20. It is important during the early stages of 50S assembly. It makes multiple contacts with different domains of the 23S rRNA in the assembled 50S subunit and ribosome. Functionally, the globular domain of the protein is located near the polypeptide exit tunnel on the outside of the subunit, while an extended beta-hairpin is found that lines the wall of the exit tunnel in the center of the 70S ribosome. This is Large ribosomal subunit protein uL22 from Lachnoclostridium phytofermentans (strain ATCC 700394 / DSM 18823 / ISDg) (Clostridium phytofermentans).